The sequence spans 234 residues: 7-carboxy-7-deazaguanine synthase (234 aa).

The tract at residues 1 to 28 (MPLNCDTKTAGEISSSIPSGSGSHQPAA) is disordered. The segment covering 13–23 (ISSSIPSGSGS) has biased composition (low complexity). Substrate-binding positions include 42–44 (LQG) and Arg57. Residues 48 to 234 (TSGYPTIFIR…LQLHKFIGLP (187 aa)) form the Radical SAM core domain. The [4Fe-4S] cluster site is built by Cys61, Cys65, and Cys68. Thr70 serves as a coordination point for Mg(2+). Thr100 contacts substrate. Residue Gly102 coordinates S-adenosyl-L-methionine. Pro234 is a binding site for substrate.

It belongs to the radical SAM superfamily. 7-carboxy-7-deazaguanine synthase family. Homodimer. It depends on [4Fe-4S] cluster as a cofactor. S-adenosyl-L-methionine is required as a cofactor. Mg(2+) serves as cofactor.

It carries out the reaction 6-carboxy-5,6,7,8-tetrahydropterin + H(+) = 7-carboxy-7-deazaguanine + NH4(+). It functions in the pathway purine metabolism; 7-cyano-7-deazaguanine biosynthesis. In terms of biological role, catalyzes the complex heterocyclic radical-mediated conversion of 6-carboxy-5,6,7,8-tetrahydropterin (CPH4) to 7-carboxy-7-deazaguanine (CDG), a step common to the biosynthetic pathways of all 7-deazapurine-containing compounds. The protein is 7-carboxy-7-deazaguanine synthase of Methanospirillum hungatei JF-1 (strain ATCC 27890 / DSM 864 / NBRC 100397 / JF-1).